The following is a 120-amino-acid chain: MKTTRKESLKRRHRRIRRKVSGTPDCPRLAVFRSNHHIYAQIIDDVAQHTLAAASTLEPDLRNSLSSGATCEASAAVGKLVAERGMAKGIEQVVFDRGGNLYHGRVKALADAAREAGLQF.

Residues methionine 1–glycine 22 form a disordered region. The segment covering serine 8–valine 20 has biased composition (basic residues).

It belongs to the universal ribosomal protein uL18 family. In terms of assembly, part of the 50S ribosomal subunit; part of the 5S rRNA/L5/L18/L25 subcomplex. Contacts the 5S and 23S rRNAs.

Its function is as follows. This is one of the proteins that bind and probably mediate the attachment of the 5S RNA into the large ribosomal subunit, where it forms part of the central protuberance. The protein is Large ribosomal subunit protein uL18 of Crocosphaera subtropica (strain ATCC 51142 / BH68) (Cyanothece sp. (strain ATCC 51142)).